Reading from the N-terminus, the 903-residue chain is Valine--tRNA ligase (903 aa).

The span at 1 to 15 (MVCVTDQNNENPSQN) shows a compositional bias: polar residues. The tract at residues 1–22 (MVCVTDQNNENPSQNRADKLPK) is disordered. Positions 61–71 (PNVTGQLHMGH) match the 'HIGH' region motif. Positions 552–556 (KMSKS) match the 'KMSKS' region motif. Residue Lys555 coordinates ATP. A coiled-coil region spans residues 836–902 (TVDVAAERKR…ERITKRLEEL (67 aa)).

This sequence belongs to the class-I aminoacyl-tRNA synthetase family. ValS type 1 subfamily. In terms of assembly, monomer.

The protein localises to the cytoplasm. The enzyme catalyses tRNA(Val) + L-valine + ATP = L-valyl-tRNA(Val) + AMP + diphosphate. Catalyzes the attachment of valine to tRNA(Val). As ValRS can inadvertently accommodate and process structurally similar amino acids such as threonine, to avoid such errors, it has a 'posttransfer' editing activity that hydrolyzes mischarged Thr-tRNA(Val) in a tRNA-dependent manner. This chain is Valine--tRNA ligase, found in Corynebacterium efficiens (strain DSM 44549 / YS-314 / AJ 12310 / JCM 11189 / NBRC 100395).